A 101-amino-acid chain; its full sequence is Small ribosomal subunit protein uS14 (101 aa).

The tract at residues 1 to 21 (MAKTSAVEKNKRRRKSVAQQA) is disordered.

Belongs to the universal ribosomal protein uS14 family. Part of the 30S ribosomal subunit. Contacts proteins S3 and S10.

In terms of biological role, binds 16S rRNA, required for the assembly of 30S particles and may also be responsible for determining the conformation of the 16S rRNA at the A site. The chain is Small ribosomal subunit protein uS14 from Agrobacterium fabrum (strain C58 / ATCC 33970) (Agrobacterium tumefaciens (strain C58)).